Consider the following 336-residue polypeptide: Fructose-1,6-bisphosphatase class 1 (336 aa).

4 residues coordinate Mg(2+): Glu-90, Asp-112, Leu-114, and Asp-115. Substrate is bound by residues 115–118, Asn-211, and Lys-277; that span reads DGSS. Mg(2+) is bound at residue Glu-283.

It belongs to the FBPase class 1 family. In terms of assembly, homotetramer. Mg(2+) serves as cofactor.

It is found in the cytoplasm. It carries out the reaction beta-D-fructose 1,6-bisphosphate + H2O = beta-D-fructose 6-phosphate + phosphate. Its pathway is carbohydrate biosynthesis; gluconeogenesis. The sequence is that of Fructose-1,6-bisphosphatase class 1 from Pseudomonas aeruginosa (strain ATCC 15692 / DSM 22644 / CIP 104116 / JCM 14847 / LMG 12228 / 1C / PRS 101 / PAO1).